The primary structure comprises 559 residues: MATVKSDIEIARAAKKLPIIEIGAKLGIPAEDLAPYGHDKAKIGAQFIAALKDKPDGKLILVTAINPTPAGEGKTTTTVGLGDGLNRIGKKAIVCVREASLGPCFGVKGGAAGGGYAQVIPMEDINLHFTGDFHAVTSAHNLLAALIDNHIYWGNEENIDVRRITWRRAMDMNDRALRDIVASLGGVANGYPREGGFDITVASEVMAILCLASDLKDLEKRLGDIIIGYRRDRTPVYARDLKADGAMAVLLKDAMQPNLVQTLENNPALVHGGPFANIAHGCNSVIATRTALKLADYVVTEAGFGADLGAEKFFDIKCRKAGLAPDAAVIVATVRALKMNGGVKKDDLGQENVEALVKGCANLGRHLANVRKFGVPVVVAINHFVSDTNAEIEAVKNYVARLGAEAILCRHWAEGSAGIEELAYKVVELAESGQAKFQPLYPDNLPLLEKIEIVASKIYHAGEVTADKAVRDQLRSWEDQGYGYLPVCMAKTQYSFSTDPNVRGAPEGHIVQVREVRLSAGAGFVVVITGEIMTMPGLPKAPAAERIFLNDQGYIEGLF.

68–75 (TPAGEGKT) serves as a coordination point for ATP.

The protein belongs to the formate--tetrahydrofolate ligase family.

It carries out the reaction (6S)-5,6,7,8-tetrahydrofolate + formate + ATP = (6R)-10-formyltetrahydrofolate + ADP + phosphate. It participates in one-carbon metabolism; tetrahydrofolate interconversion. This chain is Formate--tetrahydrofolate ligase, found in Rhizobium rhizogenes (strain K84 / ATCC BAA-868) (Agrobacterium radiobacter).